A 396-amino-acid polypeptide reads, in one-letter code: Elongation factor Tu (396 aa).

The tr-type G domain maps to 10 to 206; that stretch reads KPHCNIGTIG…QVDAYIPQPE (197 aa). Residues 19–26 are G1; that stretch reads GHVDHGKT. 19 to 26 is a binding site for GTP; that stretch reads GHVDHGKT. Residue Thr26 coordinates Mg(2+). The segment at 60–64 is G2; sequence GITIS. Residues 81 to 84 form a G3 region; that stretch reads DCPG. GTP contacts are provided by residues 81 to 85 and 136 to 139; these read DCPGH and NKVD. Residues 136–139 are G4; sequence NKVD. The G5 stretch occupies residues 174–176; it reads SAL.

Belongs to the TRAFAC class translation factor GTPase superfamily. Classic translation factor GTPase family. EF-Tu/EF-1A subfamily. Monomer.

The protein resides in the cytoplasm. The enzyme catalyses GTP + H2O = GDP + phosphate + H(+). Functionally, GTP hydrolase that promotes the GTP-dependent binding of aminoacyl-tRNA to the A-site of ribosomes during protein biosynthesis. The polypeptide is Elongation factor Tu (Gluconobacter oxydans (strain 621H) (Gluconobacter suboxydans)).